The chain runs to 523 residues: Rho guanine nucleotide exchange factor 8 (523 aa).

Positions 44–57 are enriched in polar residues; that stretch reads VESNTPESQNSDSF. Disordered stretches follow at residues 44 to 83 and 442 to 523; these read VESN…ERQQ and ETSD…KDRH. The PRONE domain maps to 76-440; sequence GKRSERQQAD…TLALKQTLLA (365 aa). Residues 465 to 475 are compositionally biased toward basic and acidic residues; the sequence is EAEKHDPHSKT.

Homodimer. The homodimer interacts with ARAC5/ROP4. Interacts with ARAC11/ROP1 and ARAC10/ROP11. Interacts with PRK6. Expressed in pollen grains and pollen tubes.

Its subcellular location is the cell membrane. Guanine-nucleotide exchange factor (GEF) that acts as an activator of Rop (Rho of plants) GTPases by promoting the exchange of GDP for GTP. Active as homodimer. This is Rho guanine nucleotide exchange factor 8 from Arabidopsis thaliana (Mouse-ear cress).